A 238-amino-acid polypeptide reads, in one-letter code: Ribonuclease Rh (238 aa).

A signal peptide spans 1-16 (MKAVLALATLIGSTLA). 5 disulfides stabilise this stretch: cysteine 19–cysteine 36, cysteine 26–cysteine 69, cysteine 35–cysteine 136, cysteine 79–cysteine 128, and cysteine 198–cysteine 229. Active-site residues include histidine 62, glutamate 121, and histidine 125.

It belongs to the RNase T2 family.

The enzyme catalyses a ribonucleotidyl-ribonucleotide-RNA + H2O = a 3'-end 3'-phospho-ribonucleotide-RNA + a 5'-end dephospho-ribonucleoside-RNA + H(+). In terms of biological role, this is a base non-specific ribonuclease. The protein is Ribonuclease Rh of Rhizopus niveus.